A 228-amino-acid polypeptide reads, in one-letter code: MSQTPIELKGSSFTLSVVHLHDSQPEVIYQALQEKIEQAPAFLKNAPVVINVAALTAETDWIKLQQAISSTGLHVVGVSGCTDDALKKTIAQAGLPLLSEGKAQRRVVEPVAAVPAAVKTKVINTPVRSGQQIYARNCDLIVTSSVSAGAEVIADGNIHIYGMMRGRALAGVSGDVQSQIFCTHLAAELVSIAGRYWLSDQIPEPYFGQPARINLNQLDNVLTIKPLD.

Belongs to the MinC family. Interacts with MinD and FtsZ.

Functionally, cell division inhibitor that blocks the formation of polar Z ring septums. Rapidly oscillates between the poles of the cell to destabilize FtsZ filaments that have formed before they mature into polar Z rings. Prevents FtsZ polymerization. The chain is Probable septum site-determining protein MinC from Pectobacterium carotovorum subsp. carotovorum (strain PC1).